A 185-amino-acid chain; its full sequence is GTP cyclohydrolase 1 (185 aa).

Positions 75, 78, and 146 each coordinate Zn(2+).

This sequence belongs to the GTP cyclohydrolase I family. As to quaternary structure, toroid-shaped homodecamer, composed of two pentamers of five dimers.

The catalysed reaction is GTP + H2O = 7,8-dihydroneopterin 3'-triphosphate + formate + H(+). It participates in cofactor biosynthesis; 7,8-dihydroneopterin triphosphate biosynthesis; 7,8-dihydroneopterin triphosphate from GTP: step 1/1. The chain is GTP cyclohydrolase 1 from Methylococcus capsulatus (strain ATCC 33009 / NCIMB 11132 / Bath).